The primary structure comprises 238 residues: 15,16-dihydrobiliverdin:ferredoxin oxidoreductase (238 aa).

The protein belongs to the HY2 family.

The catalysed reaction is 15,16-dihydrobiliverdin + oxidized 2[4Fe-4S]-[ferredoxin] = biliverdin IXalpha + reduced 2[4Fe-4S]-[ferredoxin] + 2 H(+). Its function is as follows. Catalyzes the two-electron reduction of biliverdin IX-alpha at the C15 methine bridge. The polypeptide is 15,16-dihydrobiliverdin:ferredoxin oxidoreductase (Prochlorococcus marinus (strain MIT 9211)).